Reading from the N-terminus, the 258-residue chain is Imidazole glycerol phosphate synthase subunit HisF (258 aa).

Catalysis depends on residues D11 and D130.

Belongs to the HisA/HisF family. As to quaternary structure, heterodimer of HisH and HisF.

The protein resides in the cytoplasm. It catalyses the reaction 5-[(5-phospho-1-deoxy-D-ribulos-1-ylimino)methylamino]-1-(5-phospho-beta-D-ribosyl)imidazole-4-carboxamide + L-glutamine = D-erythro-1-(imidazol-4-yl)glycerol 3-phosphate + 5-amino-1-(5-phospho-beta-D-ribosyl)imidazole-4-carboxamide + L-glutamate + H(+). It functions in the pathway amino-acid biosynthesis; L-histidine biosynthesis; L-histidine from 5-phospho-alpha-D-ribose 1-diphosphate: step 5/9. In terms of biological role, IGPS catalyzes the conversion of PRFAR and glutamine to IGP, AICAR and glutamate. The HisF subunit catalyzes the cyclization activity that produces IGP and AICAR from PRFAR using the ammonia provided by the HisH subunit. The polypeptide is Imidazole glycerol phosphate synthase subunit HisF (Stenotrophomonas maltophilia (strain K279a)).